Reading from the N-terminus, the 417-residue chain is Gamma-glutamyl phosphate reductase (417 aa).

This sequence belongs to the gamma-glutamyl phosphate reductase family.

It localises to the cytoplasm. It carries out the reaction L-glutamate 5-semialdehyde + phosphate + NADP(+) = L-glutamyl 5-phosphate + NADPH + H(+). The protein operates within amino-acid biosynthesis; L-proline biosynthesis; L-glutamate 5-semialdehyde from L-glutamate: step 2/2. Its function is as follows. Catalyzes the NADPH-dependent reduction of L-glutamate 5-phosphate into L-glutamate 5-semialdehyde and phosphate. The product spontaneously undergoes cyclization to form 1-pyrroline-5-carboxylate. This is Gamma-glutamyl phosphate reductase from Legionella pneumophila subsp. pneumophila (strain Philadelphia 1 / ATCC 33152 / DSM 7513).